A 189-amino-acid polypeptide reads, in one-letter code: 3-hydroxyanthranilate 3,4-dioxygenase (189 aa).

Arginine 49 contacts O2. Histidine 53, glutamate 59, and histidine 97 together coordinate Fe cation. Glutamate 59 contacts substrate. 2 residues coordinate substrate: arginine 101 and glutamate 112. Fe cation is bound by residues cysteine 127, cysteine 130, cysteine 165, and cysteine 168.

It belongs to the 3-HAO family. In terms of assembly, homodimer. The cofactor is Fe(2+).

It carries out the reaction 3-hydroxyanthranilate + O2 = (2Z,4Z)-2-amino-3-carboxymuconate 6-semialdehyde. It functions in the pathway cofactor biosynthesis; NAD(+) biosynthesis; quinolinate from L-kynurenine: step 3/3. Its function is as follows. Catalyzes the oxidative ring opening of 3-hydroxyanthranilate to 2-amino-3-carboxymuconate semialdehyde, which spontaneously cyclizes to quinolinate. This Cupriavidus pinatubonensis (strain JMP 134 / LMG 1197) (Cupriavidus necator (strain JMP 134)) protein is 3-hydroxyanthranilate 3,4-dioxygenase.